The chain runs to 130 residues: Biotin carboxyl carrier protein (130 aa).

The disordered stretch occupies residues 20–64 (EISESSVPAATPITPTTENTRAASDQKQQSQTPSPAATASAANTM). Polar residues predominate over residues 23 to 46 (ESSVPAATPITPTTENTRAASDQK). The segment covering 47-64 (QQSQTPSPAATASAANTM) has biased composition (low complexity). The Biotinyl-binding domain maps to 55 to 130 (AATASAANTM…NAGDNLITIA (76 aa)). K96 bears the N6-biotinyllysine mark.

The protein is Biotin carboxyl carrier protein (bcc) of Streptococcus mutans serotype c (strain ATCC 700610 / UA159).